Here is a 133-residue protein sequence, read N- to C-terminus: uncharacterized protein (133 aa).

The Response regulatory domain occupies 9–128 (RILVYSDNVQ…VLGRTVLSLL (120 aa)). The residue at position 64 (D64) is a 4-aspartylphosphate.

This is an uncharacterized protein from Mycobacterium tuberculosis (strain CDC 1551 / Oshkosh).